The primary structure comprises 179 residues: Large ribosomal subunit protein uL6 (179 aa).

It belongs to the universal ribosomal protein uL6 family. As to quaternary structure, part of the 50S ribosomal subunit.

In terms of biological role, this protein binds to the 23S rRNA, and is important in its secondary structure. It is located near the subunit interface in the base of the L7/L12 stalk, and near the tRNA binding site of the peptidyltransferase center. The sequence is that of Large ribosomal subunit protein uL6 from Beutenbergia cavernae (strain ATCC BAA-8 / DSM 12333 / CCUG 43141 / JCM 11478 / NBRC 16432 / NCIMB 13614 / HKI 0122).